A 372-amino-acid polypeptide reads, in one-letter code: Fatty acid conjugase FAC2 B (372 aa).

2 consecutive transmembrane segments (helical) span residues 44 to 64 (YFLFHDIIVTCILFYVASNYI) and 74 to 94 (IVWPVYWISQGVFLGRLWMIG). The Histidine box-1 signature appears at 95-99 (HECGH). The Histidine box-2 signature appears at 131–135 (HRNHH). The next 3 helical transmembrane spans lie at 166–186 (IGLMITMLCKLTFGYAAYIMF), 217–237 (VLFSDIGICIVLYACYRIVTV), and 240–260 (AMPAFYVYGIPWVIMSAILFA). The Histidine box-3 signature appears at 304–308 (HVIHH).

Belongs to the fatty acid desaturase type 1 family. As to expression, expressed exclusively in the developing seeds. Not detected in leaves.

It localises to the microsome membrane. It carries out the reaction a (9Z,12Z)-octadecadienoyl-containing glycerolipid + AH2 + O2 = a (8E,10E,12Z)-octadecatrienoyl-containing glycerolipid + A + 2 H2O. The protein operates within lipid metabolism; polyunsaturated fatty acid biosynthesis. In terms of biological role, fatty acid conjugase converting 18:2(9Z, 12Z) to calendic acid 18:3(8E, 10E, 12Z). Converts alpha-linolenic acid (18:3(9Z, 12Z, 15Z)) into 18:4(8E, 10E, 12Z, 15Z). Also has weak activity on the mono-unsaturates 16:1(9Z) and 18:1(9Z) producing two conjugated double bonds at delta(8) and delta(10) position. This chain is Fatty acid conjugase FAC2 B, found in Calendula officinalis (Pot marigold).